A 268-amino-acid chain; its full sequence is Ribosomal RNA small subunit methyltransferase A (268 aa).

S-adenosyl-L-methionine-binding residues include asparagine 18, leucine 20, glycine 45, glutamate 66, aspartate 91, and asparagine 112.

The protein belongs to the class I-like SAM-binding methyltransferase superfamily. rRNA adenine N(6)-methyltransferase family. RsmA subfamily.

It is found in the cytoplasm. It carries out the reaction adenosine(1518)/adenosine(1519) in 16S rRNA + 4 S-adenosyl-L-methionine = N(6)-dimethyladenosine(1518)/N(6)-dimethyladenosine(1519) in 16S rRNA + 4 S-adenosyl-L-homocysteine + 4 H(+). Specifically dimethylates two adjacent adenosines (A1518 and A1519) in the loop of a conserved hairpin near the 3'-end of 16S rRNA in the 30S particle. May play a critical role in biogenesis of 30S subunits. In Vibrio vulnificus (strain CMCP6), this protein is Ribosomal RNA small subunit methyltransferase A.